Reading from the N-terminus, the 440-residue chain is G-protein coupled receptor family C group 5 member C (440 aa).

The N-terminal stretch at 1 to 22 (MATHRTLLMCLGLPLFFPGALA) is a signal peptide. Residues 23–49 (QNHAPPGCSPDLDPLYYNLCDRSGAWG) are Extracellular-facing. A helical membrane pass occupies residues 50 to 70 (IVSEAVAGAGIITTFVLTIIL). At 71-84 (VASLPFVQDTKKRS) the chain is on the cytoplasmic side. Residues 85–105 (LLGTQVFFLLGTLGLFCLVFA) form a helical membrane-spanning segment. The Extracellular segment spans residues 106 to 119 (CVVKPDFSTCASRR). The chain crosses the membrane as a helical span at residues 120-140 (FLFGVLFAICFSCLVAHVLSL). Residues 141-155 (NFLTRKNHGPRGWVI) lie on the Cytoplasmic side of the membrane. A helical membrane pass occupies residues 156–176 (FTVALLLTLVEVIINTEWLII). The Extracellular segment spans residues 177–207 (TLVRGGGQVSPLGNVSADSTMTSPCAIANMD). Residue Asn-190 is glycosylated (N-linked (GlcNAc...) asparagine). The helical transmembrane segment at 208–228 (FVMALIYVMLLLLTAFLGAWP) threads the bilayer. Residues 229–240 (TLCGRFKRWRKH) lie on the Cytoplasmic side of the membrane. The chain crosses the membrane as a helical span at residues 241–261 (GVFVLLTTVISIAIWVVWIVM). Topologically, residues 262-278 (YTYGNEQHHSPTWDDPT) are extracellular. A helical membrane pass occupies residues 279-299 (LAIALAANAWTFVLFYVIPEV). The Cytoplasmic segment spans residues 300 to 440 (SQVTKPSPEQ…QVFRNPYVWD (141 aa)). Phosphoserine is present on residues Ser-343, Ser-382, Ser-402, and Ser-405. The residue at position 413 (Tyr-413) is a Phosphotyrosine. Thr-422 is subject to Phosphothreonine.

It belongs to the G-protein coupled receptor 3 family.

Its subcellular location is the cell membrane. Functionally, this retinoic acid-inducible G-protein coupled receptor provide evidence for a possible interaction between retinoid and G-protein signaling pathways. The sequence is that of G-protein coupled receptor family C group 5 member C (Gprc5c) from Mus musculus (Mouse).